The chain runs to 554 residues: Glucose-6-phosphate isomerase (554 aa).

Residue E359 is the Proton donor of the active site. Active-site residues include H390 and K518.

The protein belongs to the GPI family.

Its subcellular location is the cytoplasm. It carries out the reaction alpha-D-glucose 6-phosphate = beta-D-fructose 6-phosphate. Its pathway is carbohydrate biosynthesis; gluconeogenesis. It participates in carbohydrate degradation; glycolysis; D-glyceraldehyde 3-phosphate and glycerone phosphate from D-glucose: step 2/4. Functionally, catalyzes the reversible isomerization of glucose-6-phosphate to fructose-6-phosphate. This chain is Glucose-6-phosphate isomerase, found in Ectopseudomonas mendocina (strain ymp) (Pseudomonas mendocina).